The chain runs to 729 residues: Fatty acid oxidation complex subunit alpha (729 aa).

The enoyl-CoA hydratase/isomerase stretch occupies residues 1–189 (MLYKGDTLYL…KIGLVDGVVK (189 aa)). Asp-296 lines the substrate pocket. Residues 311–729 (ETPKQAAVLG…ARPVGSLKTA (419 aa)) are 3-hydroxyacyl-CoA dehydrogenase. NAD(+) contacts are provided by residues Met-324, Asp-343, 400–402 (VVE), Lys-407, and Ser-429. His-450 functions as the For 3-hydroxyacyl-CoA dehydrogenase activity in the catalytic mechanism. Residue Asn-453 participates in NAD(+) binding. Asn-500 and Tyr-660 together coordinate substrate. Residues 708-729 (RHNEPYYPPVEPARPVGSLKTA) are disordered.

The protein in the N-terminal section; belongs to the enoyl-CoA hydratase/isomerase family. In the C-terminal section; belongs to the 3-hydroxyacyl-CoA dehydrogenase family. As to quaternary structure, heterotetramer of two alpha chains (FadB) and two beta chains (FadA).

It carries out the reaction a (3S)-3-hydroxyacyl-CoA + NAD(+) = a 3-oxoacyl-CoA + NADH + H(+). It catalyses the reaction a (3S)-3-hydroxyacyl-CoA = a (2E)-enoyl-CoA + H2O. The catalysed reaction is a 4-saturated-(3S)-3-hydroxyacyl-CoA = a (3E)-enoyl-CoA + H2O. The enzyme catalyses (3S)-3-hydroxybutanoyl-CoA = (3R)-3-hydroxybutanoyl-CoA. It carries out the reaction a (3Z)-enoyl-CoA = a 4-saturated (2E)-enoyl-CoA. It catalyses the reaction a (3E)-enoyl-CoA = a 4-saturated (2E)-enoyl-CoA. It functions in the pathway lipid metabolism; fatty acid beta-oxidation. Involved in the aerobic and anaerobic degradation of long-chain fatty acids via beta-oxidation cycle. Catalyzes the formation of 3-oxoacyl-CoA from enoyl-CoA via L-3-hydroxyacyl-CoA. It can also use D-3-hydroxyacyl-CoA and cis-3-enoyl-CoA as substrate. In Salmonella enteritidis PT4 (strain P125109), this protein is Fatty acid oxidation complex subunit alpha.